We begin with the raw amino-acid sequence, 504 residues long: Aspartyl/glutamyl-tRNA(Asn/Gln) amidotransferase subunit B (504 aa).

This sequence belongs to the GatB/GatE family. GatB subfamily. In terms of assembly, heterotrimer of A, B and C subunits.

The enzyme catalyses L-glutamyl-tRNA(Gln) + L-glutamine + ATP + H2O = L-glutaminyl-tRNA(Gln) + L-glutamate + ADP + phosphate + H(+). The catalysed reaction is L-aspartyl-tRNA(Asn) + L-glutamine + ATP + H2O = L-asparaginyl-tRNA(Asn) + L-glutamate + ADP + phosphate + 2 H(+). Functionally, allows the formation of correctly charged Asn-tRNA(Asn) or Gln-tRNA(Gln) through the transamidation of misacylated Asp-tRNA(Asn) or Glu-tRNA(Gln) in organisms which lack either or both of asparaginyl-tRNA or glutaminyl-tRNA synthetases. The reaction takes place in the presence of glutamine and ATP through an activated phospho-Asp-tRNA(Asn) or phospho-Glu-tRNA(Gln). This Tropheryma whipplei (strain Twist) (Whipple's bacillus) protein is Aspartyl/glutamyl-tRNA(Asn/Gln) amidotransferase subunit B.